A 268-amino-acid chain; its full sequence is Microtubule-associated protein RP/EB family member 1 (268 aa).

An N-acetylalanine modification is found at Ala2. One can recognise a Calponin-homology (CH) domain in the interval 14–116 (NLSRHDMLAW…FVQWFKKFFD (103 aa)). An N6-crotonyllysine modification is found at Lys66. Position 124 is a phosphotyrosine (Tyr124). The interaction with MTUS2/TIP150 stretch occupies residues 124 to 268 (YDPVAARQGQ…GGPQEEQEEY (145 aa)). Positions 146–160 (LNKPKKPLSSSSAAP) are enriched in low complexity. Positions 146 to 191 (LNKPKKPLSSSSAAPQRPISTQRTAAAPKAGPGVVRKNPGVGNGDD) are disordered. Phosphoserine is present on residues Ser155 and Ser165. One can recognise an EB1 C-terminal domain in the interval 185–255 (GVGNGDDEAA…LYATDEGFVI (71 aa)). An interaction with CDK5RAP2 region spans residues 185–268 (GVGNGDDEAA…GGPQEEQEEY (84 aa)). The segment at 206-211 (TVEDLE) is interaction with APC. Residues 208 to 268 (EDLEKERDFY…GGPQEEQEEY (61 aa)) form a DCTN1-binding region. Lys220 carries the N6-acetyllysine modification. An APC-binding region spans residues 220-242 (KLRNIELICQENEGENDPVLQRI). The tract at residues 232-255 (EGENDPVLQRIVDILYATDEGFVI) is interaction with SKA1.

It belongs to the MAPRE family. In terms of assembly, homodimer. Heterodimer with MAPRE3. Interacts with DCTN1, DCTN2, TERF1 and dynein intermediate chain. Interaction with DIAPH1 and DIAPH2. Interacts (via C-terminal residues 206-211) with APC (via C-terminal residues 2674-2845); the interaction inhibits association with and bundling of F-actin. Interacts with CLASP2, DST, KIF2C and STIM1; probably required for their targeting to the growing microtubule plus ends. Interacts with MTUS2; interaction is direct and probably targets MTUS2 to microtubules. Interacts (via C-terminus) with SKA1 (via SXIP motif); the interaction is direct and stabilizes the kinetochore-microtubule attachment of the SKA1 complex. Interacts with APC2. Interacts with CLASP1. Interacts with CDK5RAP2. Interacts with MACF1. Interacts with RABL2/RABL2A; binds preferentially to GTP-bound RABL2. Interacts with KCNAB2. Interacts (via C-terminus) with CLIP1. Interacts with SLAIN2 and SLAIN1. Interacts with KIF18B; this interaction is required for efficient accumulation of KIF18B at microtubule plus ends. Interacts with MISP. Interacts with KNSTRN. Interacts with NCKAP5L. Interacts with CAMSAP2. Interacts with PDE4DIP isoform 13/MMG8/SMYLE; this interaction is required for its recruitment to the Golgi apparatus. Forms a pericentrosomal complex with AKAP9, CDK5RAP2 and PDE4DIP isoform 13/MMG8/SMYLE; within this complex, MAPRE1 binding to CDK5RAP2 may be mediated by PDE4DIP. Interacts with AKNA. Interacts with GAS2L1, GAS2L2, and GAS2L3. Interacts with RARRES1 and AGBL2. In terms of processing, acetylation at Lys-220 by KAT2B/PCAF promotes dynamic kinetochore-microtubule interactions in early mitosis. Post-translationally, crotonylated by KAT5 during mitosis, promoting astral microtubule plasticity and dynamic connection between astral microtubules and the cortex during mitotic chromosome segregation, thereby ensuring accurate spindle positioning in mitosis. Decrotonylated by HDAC3.

Its subcellular location is the cytoplasm. The protein localises to the cytoskeleton. The protein resides in the microtubule organizing center. It is found in the centrosome. It localises to the golgi apparatus. Its subcellular location is the spindle. The protein localises to the spindle pole. Its function is as follows. Plus-end tracking protein (+TIP) that binds to the plus-end of microtubules and regulates the dynamics of the microtubule cytoskeleton. Recruits other +TIP proteins to microtubules by binding to a conserved Ser-X-Leu-Pro (SXLP) motif in their polypeptide chains. Promotes cytoplasmic microtubule nucleation and elongation. Involved in mitotic spindle positioning by stabilizing microtubules and promoting dynamic connection between astral microtubules and the cortex during mitotic chromosome segregation. Assists chromosome alignment in metaphase by recruiting the SKA complex to the spindle and stabilizing its interactions with microtubule bundles (K-fibers). Also acts as a regulator of minus-end microtubule organization: interacts with the complex formed by AKAP9 and PDE4DIP, leading to recruit CAMSAP2 to the Golgi apparatus, thereby tethering non-centrosomal minus-end microtubules to the Golgi, an important step for polarized cell movement. Promotes elongation of CAMSAP2-decorated microtubule stretches on the minus-end of microtubules. Acts as a regulator of autophagosome transport via interaction with CAMSAP2. Functions downstream of Rho GTPases and DIAPH1 in stable microtubule formation. May play a role in cell migration. The polypeptide is Microtubule-associated protein RP/EB family member 1 (MAPRE1) (Pongo abelii (Sumatran orangutan)).